The chain runs to 520 residues: Nonsense-mediated mRNA decay factor SMG9 (520 aa).

2 disordered regions span residues 1–94 (MSES…PAPL) and 107–143 (GKGPVAATGASTPEGTAPPPPTAPAPPKGEKEGQRPT). Residue Ser-2 is modified to N-acetylserine. Residues Ser-2, Ser-4, Ser-7, Ser-32, and Ser-53 each carry the phosphoserine modification. Positions 36 to 53 (GRERDYIAPWERERRDGS) are enriched in basic and acidic residues. Positions 78–94 (QPPPSTAPAAPPAPAPL) are enriched in pro residues. Low complexity predominate over residues 112–121 (AATGASTPEG). The segment covering 122-133 (TAPPPPTAPAPP) has biased composition (pro residues). Residue Ser-451 is modified to Phosphoserine.

The protein belongs to the SMG9 family. Self-associates to form homodimers and forms heterodimers with SMG8; these assembly forms may represent SMG1C intermediate forms. Component of the SMG1C complex composed of SMG1, SMG8 and SMG9. Interacts with DHX34; the interaction is RNA-independent. Phosphorylated by SMG1.

In terms of biological role, involved in nonsense-mediated decay (NMD) of mRNAs containing premature stop codons. Is recruited by release factors to stalled ribosomes together with SMG1 and SMG8 (forming the SMG1C protein kinase complex) and, in the SMG1C complex, is required for the efficient association between SMG1 and SMG8. Plays a role in brain, heart, and eye development. The protein is Nonsense-mediated mRNA decay factor SMG9 of Rattus norvegicus (Rat).